A 379-amino-acid chain; its full sequence is Cytochrome b (379 aa).

4 consecutive transmembrane segments (helical) span residues 32-52, 76-98, 111-131, and 177-197; these read YGSL…VLAT, WLLR…LHIG, VWNI…LGYV, and FFAL…LHIF. Residues histidine 82 and histidine 96 each coordinate heme b. 2 residues coordinate heme b: histidine 181 and histidine 195. Residue histidine 200 participates in a ubiquinone binding. The next 4 helical transmembrane spans lie at 223 to 243, 287 to 304, 320 to 340, and 348 to 367; these read YSVK…VFTL, LGGV…FLFS, LARL…WLGS, and NEVA…TMCA.

Belongs to the cytochrome b family. The main subunits of complex b-c1 are: cytochrome b, cytochrome c1 and the Rieske protein. The cofactor is heme b.

It is found in the mitochondrion inner membrane. Component of the ubiquinol-cytochrome c reductase complex (complex III or cytochrome b-c1 complex) that is part of the mitochondrial respiratory chain. The b-c1 complex mediates electron transfer from ubiquinol to cytochrome c. Contributes to the generation of a proton gradient across the mitochondrial membrane that is then used for ATP synthesis. This chain is Cytochrome b (mt:Cyt-b), found in Brachionus plicatilis (Marine rotifer).